A 304-amino-acid polypeptide reads, in one-letter code: tRNA pseudouridine synthase B (304 aa).

The Nucleophile role is filled by D41.

This sequence belongs to the pseudouridine synthase TruB family. Type 1 subfamily.

It catalyses the reaction uridine(55) in tRNA = pseudouridine(55) in tRNA. Its function is as follows. Responsible for synthesis of pseudouridine from uracil-55 in the psi GC loop of transfer RNAs. This is tRNA pseudouridine synthase B from Nitratidesulfovibrio vulgaris (strain ATCC 29579 / DSM 644 / CCUG 34227 / NCIMB 8303 / VKM B-1760 / Hildenborough) (Desulfovibrio vulgaris).